Here is a 398-residue protein sequence, read N- to C-terminus: 8-amino-7-oxononanoate synthase (398 aa).

Residue arginine 26 participates in substrate binding. Residue 113–114 (GF) coordinates pyridoxal 5'-phosphate. Histidine 138 lines the substrate pocket. The pyridoxal 5'-phosphate site is built by serine 181, histidine 209, and threonine 238. N6-(pyridoxal phosphate)lysine is present on lysine 241. Substrate is bound at residue threonine 355.

Belongs to the class-II pyridoxal-phosphate-dependent aminotransferase family. BioF subfamily. As to quaternary structure, homodimer. The cofactor is pyridoxal 5'-phosphate.

It catalyses the reaction 6-carboxyhexanoyl-[ACP] + L-alanine + H(+) = (8S)-8-amino-7-oxononanoate + holo-[ACP] + CO2. It functions in the pathway cofactor biosynthesis; biotin biosynthesis. Functionally, catalyzes the decarboxylative condensation of pimeloyl-[acyl-carrier protein] and L-alanine to produce 8-amino-7-oxononanoate (AON), [acyl-carrier protein], and carbon dioxide. This chain is 8-amino-7-oxononanoate synthase, found in Aeromonas salmonicida (strain A449).